A 344-amino-acid chain; its full sequence is Dihydroorotase (344 aa).

Zn(2+) is bound by residues histidine 14 and histidine 16. Substrate is bound by residues 16–18 (HLR) and asparagine 42. The Zn(2+) site is built by lysine 100, histidine 137, and histidine 175. Position 100 is an N6-carboxylysine (lysine 100). Histidine 137 contributes to the substrate binding site. Leucine 220 contacts substrate. Aspartate 248 is a binding site for Zn(2+). Residue aspartate 248 is part of the active site. Substrate-binding residues include histidine 252 and alanine 264.

It belongs to the metallo-dependent hydrolases superfamily. DHOase family. Class II DHOase subfamily. As to quaternary structure, homodimer. Zn(2+) serves as cofactor.

The catalysed reaction is (S)-dihydroorotate + H2O = N-carbamoyl-L-aspartate + H(+). It participates in pyrimidine metabolism; UMP biosynthesis via de novo pathway; (S)-dihydroorotate from bicarbonate: step 3/3. In terms of biological role, catalyzes the reversible cyclization of carbamoyl aspartate to dihydroorotate. This is Dihydroorotase from Cupriavidus taiwanensis (strain DSM 17343 / BCRC 17206 / CCUG 44338 / CIP 107171 / LMG 19424 / R1) (Ralstonia taiwanensis (strain LMG 19424)).